The chain runs to 113 residues: Transcription initiation factor IIA subunit 2 (113 aa).

It belongs to the TFIIA subunit 2 family. TFIIA is a heterodimer of the large unprocessed subunit 1 and a small subunit gamma. It was originally believed to be a heterotrimer of an alpha, a beta and a gamma subunit.

The protein localises to the nucleus. TFIIA is a component of the transcription machinery of RNA polymerase II and plays an important role in transcriptional activation. TFIIA in a complex with TBP mediates transcriptional activity. The protein is Transcription initiation factor IIA subunit 2 of Caenorhabditis elegans.